Here is a 64-residue protein sequence, read N- to C-terminus: Large ribosomal subunit protein bL35 (64 aa).

A disordered region spans residues 1–25 (MPKLKTHSGAAKRFKKTATGKVKRS).

The protein belongs to the bacterial ribosomal protein bL35 family.

The sequence is that of Large ribosomal subunit protein bL35 from Koribacter versatilis (strain Ellin345).